The sequence spans 538 residues: Syncytin-2 (538 aa).

The signal sequence occupies residues methionine 1–alanine 15. Over alanine 16–lysine 478 the chain is Extracellular. A CXXC motif is present at residues cysteine 43–cysteine 46. 3 disulfides stabilise this stretch: cysteine 43-cysteine 46, cysteine 43-cysteine 439, and cysteine 431-cysteine 438. N-linked (GlcNAc...) asparagine glycans are attached at residues asparagine 133, asparagine 146, asparagine 177, asparagine 220, asparagine 241, asparagine 247, asparagine 312, and asparagine 332. Residues phenylalanine 354 to isoleucine 374 are fusion peptide. Positions leucine 414–isoleucine 430 match the CKS-17 motif. The short motif at cysteine 431–cysteine 439 is the CX6CC element. N-linked (GlcNAc...) asparagine glycosylation is present at asparagine 443. A helical transmembrane segment spans residues tryptophan 479–phenylalanine 499. Residues glycine 500 to phenylalanine 538 lie on the Cytoplasmic side of the membrane.

The protein belongs to the gamma type-C retroviral envelope protein family. HERV class-I FRD env subfamily. The surface and transmembrane proteins form a heterodimer. They are attached by non-covalent interactions or by a labile interchain disulfide bond. Interacts with MFSD2A. Specific enzymatic cleavages in vivo yield the mature SU and TM proteins. Post-translationally, the CXXC motif is highly conserved across a broad range of retroviral envelope proteins. It is thought to participate in the formation of a labile disulfide bond possibly with the CX6CC motif present in the transmembrane protein. Isomerization of the intersubunit disulfide bond to an SU intrachain disulfide bond is thought to occur upon receptor recognition in order to allow membrane fusion. Expressed at higher level in placenta. Expressed at lower level in adrenal, bone marrow, brain, breast, colon, kidney, lung, ovary, peripheral blood lymphocytes, prostate, skin, spleen, testis, thymus, thyroid, trachea.

The protein localises to the virion. It is found in the cell membrane. This endogenous retroviral envelope protein has retained its original fusogenic properties and participates in trophoblast fusion and the formation of a syncytium during placenta morphogenesis. The interaction with MFSD2A is apparently important for this process. Its function is as follows. Endogenous envelope proteins may have kept, lost or modified their original function during evolution but this one can still make pseudotypes with MLV, HIV-1 or SIV-1 virions and confer infectivity. Retroviral envelope proteins mediate receptor recognition and membrane fusion during early infection. The surface protein mediates receptor recognition, while the transmembrane protein anchors the envelope heterodimer to the viral membrane through one transmembrane domain. The other hydrophobic domain, called fusion peptide, mediates fusion of the viral membrane with the target cell membrane. The polypeptide is Syncytin-2 (ERVFRD-1) (Homo sapiens (Human)).